Reading from the N-terminus, the 758-residue chain is MTILNHTLGFPRVGLKRELKKAQESYWAGNSTQEELLNVGRELRARHWQQQQQAGVDLVPVGDFAWYDHVLTTSLLLGNVPERHQNADGSIDIDTLFRIGRGRAPTGKPAAAAEMTKWFNTNYHYMVPEFQQGQQFKLGWTQLLDEVDEALALGHKIKPVLLGPITYLWLGKVKGEQFDRLSLLNDILPVYQQVLAELAKRGIEWVQIDEPALVLELPQEWLDAYQPAYQALQGQVKLLLTTYFDSIGHNIDTIRALPVQGLHVDVVTGHDDLAVLNKNLPKEWLLSLGVINGRNVWRADLSSWFERLQPLVNSRPLWLGSSCSLLHSPIDLNEETRLDAEVKSWFAFALQKCAELALLTQALNAPNDAKLAELAAYSAPIRARRSSSRVHNAQVEQRLAAITSQDIERQLPYEARAETQRKRFNLPAWPTTTIGSFPQTTEIRGLRLDFKQGRLDGKNYRTGISEHIKHAIAEQERLGLDVLVHGEAERNDMVEYFGEHLDGFVFTQNGWVQSYGSRCVKPPVIIGDISRPEAITVEWAKYAQSLTEKPVKGMLTGPVTILCWSFPREDVSRETIAKQIALALRDEVEDLEKAGIGIIQIDEPALREGLPLRRADWQAYLQWAVDAFKLNAAVAQNDTQIHTHMCYCEFNDIMDSIAALDADVITIETSRSDMELLESFEDFAYPNEIGPGVYDIHSPNVPSVEWIEALLRKAAQRIPAERLWVNPDCGLKTRGWPETRQALANMVLAAQRLREEQV.

5-methyltetrahydropteroyltri-L-glutamate contacts are provided by residues 17-20 and K117; that span reads RELK. L-homocysteine-binding positions include 434–436 and E487; that span reads IGS. L-methionine is bound by residues 434-436 and E487; that span reads IGS. Residues 518–519 and W564 contribute to the 5-methyltetrahydropteroyltri-L-glutamate site; that span reads RC. D602 contacts L-homocysteine. D602 provides a ligand contact to L-methionine. Residue E608 participates in 5-methyltetrahydropteroyltri-L-glutamate binding. Zn(2+)-binding residues include H644, C646, and E668. H697 acts as the Proton donor in catalysis. A Zn(2+)-binding site is contributed by C729.

Belongs to the vitamin-B12 independent methionine synthase family. The cofactor is Zn(2+).

It catalyses the reaction 5-methyltetrahydropteroyltri-L-glutamate + L-homocysteine = tetrahydropteroyltri-L-glutamate + L-methionine. The protein operates within amino-acid biosynthesis; L-methionine biosynthesis via de novo pathway; L-methionine from L-homocysteine (MetE route): step 1/1. Functionally, catalyzes the transfer of a methyl group from 5-methyltetrahydrofolate to homocysteine resulting in methionine formation. The polypeptide is 5-methyltetrahydropteroyltriglutamate--homocysteine methyltransferase (Yersinia pestis bv. Antiqua (strain Antiqua)).